A 269-amino-acid chain; its full sequence is Ribosomal RNA small subunit methyltransferase A (269 aa).

Positions 17, 42, 64, 89, and 109 each coordinate S-adenosyl-L-methionine.

This sequence belongs to the class I-like SAM-binding methyltransferase superfamily. rRNA adenine N(6)-methyltransferase family. RsmA subfamily.

Its subcellular location is the cytoplasm. The catalysed reaction is adenosine(1518)/adenosine(1519) in 16S rRNA + 4 S-adenosyl-L-methionine = N(6)-dimethyladenosine(1518)/N(6)-dimethyladenosine(1519) in 16S rRNA + 4 S-adenosyl-L-homocysteine + 4 H(+). Functionally, specifically dimethylates two adjacent adenosines (A1518 and A1519) in the loop of a conserved hairpin near the 3'-end of 16S rRNA in the 30S particle. May play a critical role in biogenesis of 30S subunits. The chain is Ribosomal RNA small subunit methyltransferase A from Anaplasma phagocytophilum (strain HZ).